Consider the following 166-residue polypeptide: Protein phosphatase 1 regulatory subunit 1A (166 aa).

An N-acetylmethionine modification is found at M1. Residues 1 to 166 (MEQDNSPRKI…SQDSQGASAV (166 aa)) are disordered. The essential for activity stretch occupies residues 9–12 (KIQF). The segment covering 19-29 (PHLDPEAAEQI) has biased composition (basic and acidic residues). Phosphothreonine; by PKA is present on T35. The tract at residues 42–54 (TSDQSSPEVDEDR) is essential for activity. S43, S46, S47, and S67 each carry phosphoserine. Residues 104–114 (AAEGTGAQESQ) are compositionally biased toward low complexity. The segment covering 143–152 (AQERRGEEPS) has biased composition (basic and acidic residues). The tract at residues 143–166 (AQERRGEEPSTAKTSQDSQGASAV) is interaction with PPP1R15A. A compositionally biased stretch (polar residues) spans 153-166 (TAKTSQDSQGASAV).

The protein belongs to the protein phosphatase inhibitor 1 family. In terms of assembly, interacts with PPP1R15A. Phosphorylation of Thr-35 is required for activity.

Functionally, inhibitor of protein-phosphatase 1. This protein may be important in hormonal control of glycogen metabolism. Hormones that elevate intracellular cAMP increase I-1 activity in many tissues. I-1 activation may impose cAMP control over proteins that are not directly phosphorylated by PKA. Following a rise in intracellular calcium, I-1 is inactivated by calcineurin (or PP2B). Does not inhibit type-2 phosphatases. This is Protein phosphatase 1 regulatory subunit 1A (PPP1R1A) from Oryctolagus cuniculus (Rabbit).